The sequence spans 316 residues: N-acetylmuramic acid 6-phosphate etherase (316 aa).

Positions 66–229 constitute an SIS domain; it reads IVAAIGRGGR…STASMIRLGK (164 aa). Catalysis depends on Glu94, which acts as the Proton donor. Glu125 is an active-site residue.

This sequence belongs to the GCKR-like family. MurNAc-6-P etherase subfamily. Homodimer.

The enzyme catalyses N-acetyl-D-muramate 6-phosphate + H2O = N-acetyl-D-glucosamine 6-phosphate + (R)-lactate. Its pathway is amino-sugar metabolism; 1,6-anhydro-N-acetylmuramate degradation. It participates in amino-sugar metabolism; N-acetylmuramate degradation. The protein operates within cell wall biogenesis; peptidoglycan recycling. In terms of biological role, specifically catalyzes the cleavage of the D-lactyl ether substituent of MurNAc 6-phosphate, producing GlcNAc 6-phosphate and D-lactate. Together with AnmK, is also required for the utilization of anhydro-N-acetylmuramic acid (anhMurNAc) either imported from the medium or derived from its own cell wall murein, and thus plays a role in cell wall recycling. The sequence is that of N-acetylmuramic acid 6-phosphate etherase from Jannaschia sp. (strain CCS1).